The chain runs to 319 residues: ATP-dependent 6-phosphofructokinase (319 aa).

Gly-11 contributes to the ATP binding site. Arg-21 to Arg-25 contacts ADP. ATP-binding positions include Arg-72 to Cys-73 and Gly-102 to Ser-105. Asp-103 contacts Mg(2+). Residue Thr-125 to Asp-127 participates in substrate binding. The active-site Proton acceptor is the Asp-127. Residue Arg-154 participates in ADP binding. Residues Arg-162 and Met-169–Arg-171 contribute to the substrate site. ADP-binding positions include Gly-185–Glu-187, Arg-211, and Lys-213–His-215. Residues Glu-222, Arg-243, and His-249–Arg-252 each bind substrate.

This sequence belongs to the phosphofructokinase type A (PFKA) family. ATP-dependent PFK group I subfamily. Prokaryotic clade 'B1' sub-subfamily. As to quaternary structure, homotetramer. Requires Mg(2+) as cofactor.

It is found in the cytoplasm. It carries out the reaction beta-D-fructose 6-phosphate + ATP = beta-D-fructose 1,6-bisphosphate + ADP + H(+). The protein operates within carbohydrate degradation; glycolysis; D-glyceraldehyde 3-phosphate and glycerone phosphate from D-glucose: step 3/4. Allosterically activated by ADP and other diphosphonucleosides, and allosterically inhibited by phosphoenolpyruvate. Catalyzes the phosphorylation of D-fructose 6-phosphate to fructose 1,6-bisphosphate by ATP, the first committing step of glycolysis. The protein is ATP-dependent 6-phosphofructokinase of Anoxybacillus flavithermus (strain DSM 21510 / WK1).